A 494-amino-acid chain; its full sequence is Neuronal acetylcholine receptor subunit alpha-6 (494 aa).

The first 25 residues, 1–25 (MLTSKGQGFLHGGLCLWLCVFTPFF), serve as a signal peptide directing secretion. Residues 26 to 239 (KGCVGCATEE…ITYSFYIRRL (214 aa)) are Extracellular-facing. N-linked (GlcNAc...) asparagine glycosylation is found at N54 and N171. Cystine bridges form between C158-C172 and C222-C223. Transmembrane regions (helical) follow at residues 240–264 (PMFY…VFYL), 272–290 (VTLC…LVIT), and 306–327 (YLLF…VLNI). Residues 328–465 (HYRTPTTHTM…WKYVAMVVDR (138 aa)) are Cytoplasmic-facing. Residue S401 is modified to Phosphoserine. A helical membrane pass occupies residues 466–484 (VFLWVFIIVCVFGTAGLFL).

It belongs to the ligand-gated ion channel (TC 1.A.9) family. Acetylcholine receptor (TC 1.A.9.1) subfamily. Alpha-6/CHRNA6 sub-subfamily. As to quaternary structure, neuronal AChR is composed of two different types of subunits: alpha and non-alpha (beta). CHRNA6/alpha-6 subunit can be combined to CHRNB2/beta-2, CHRNA4/alpha-4 and CHRNB3/beta-3 to give rise to functional receptors. Heteropentamers containing CHRNB3 have an stoichiometry of (CHRNA6:CHRNB2)2:CHRNB3. Interacts with LYPD6.

The protein localises to the synaptic cell membrane. The catalysed reaction is Ca(2+)(in) = Ca(2+)(out). The enzyme catalyses K(+)(in) = K(+)(out). It catalyses the reaction Na(+)(in) = Na(+)(out). Activated by a myriad of ligands such as acetylcholine, cytisine and nicotine. CHRNA6 nAChR activity is inhibited by the antagonists alpha-conotoxin MII and PIA, a small disulfide-constrained peptides from cone snails. Component of neuronal acetylcholine receptors (nAChRs) that function as pentameric, ligand-gated cation channels with high calcium permeability among other activities. nAChRs are excitatory neurotrasnmitter receptors formed by a collection of nAChR subunits known to mediate synaptic transmission in the nervous system and the neuromuscular junction. Each nAchR subunit confers differential attributes to channel properties, including activation, deactivation and desensitization kinetics, pH sensitivity, cation permeability, and binding to allosteric modulators. CHRNA6 forms pentameric channels with CHRNB2, CHRNB3 and CHRNA4 that exhibit high sensitivity to ACh and nicotine and are predominantly expressed in only a few brain areas, including dopaminergic neurons, norepirephrine neurons and cells of the visual system. nAChrs containing CHRNA6 subunits mediate endogenous cholinergic modulation of dopamine and gamma-aminobutyric acid (GABA) release in response to nicotine at nerve terminals. The polypeptide is Neuronal acetylcholine receptor subunit alpha-6 (CHRNA6) (Pan troglodytes (Chimpanzee)).